Reading from the N-terminus, the 140-residue chain is MKAFIVLVALALAAPALGRTMDRCSLAREMSNLGVPRDQLARWACIAEHESSYRTGVVGPENYNGSNDYGIFQINDYYWCAPPSGRFSYNECGLSCNALLTDDITHSVRCAQKVLSQQGWSAWSTWHYCSGWLPSIDDCF.

The signal sequence occupies residues M1–G18. The region spanning R19–F140 is the C-type lysozyme domain. Cystine bridges form between C24-C139, C45-C129, C80-C96, and C92-C110. Active-site residues include E50 and D68.

The protein belongs to the glycosyl hydrolase 22 family. Found in the midgut.

It catalyses the reaction Hydrolysis of (1-&gt;4)-beta-linkages between N-acetylmuramic acid and N-acetyl-D-glucosamine residues in a peptidoglycan and between N-acetyl-D-glucosamine residues in chitodextrins.. Functionally, unlikely to play an active role in the humoral immune defense. May have a function in the digestion of bacteria in the food. This chain is Lysozyme B (LysB), found in Drosophila melanogaster (Fruit fly).